Reading from the N-terminus, the 305-residue chain is MAAAGQEKGYLTQTAAALDKSPSLSPQLAAPIRGRPKKCLVYPHAPKSSRLSRSVLRWLQGLDLSFFPRNINRDFSNGFLIAEIFCIYYPWELELSSFENGTSLKVKLDNWAQLEKFLARKKFKLPKELIHGTIHCKAGVPEILIEEVYTLLTHREIKSIQDDFVNFTDYSYQMRLPLVSRSTVSKSIKDNIRLSELLSNPNMLTNELKAEFLILLHMLQRKLGRKLNPEWFDVKPTVGEVTLNHLPAQASGRRYNLKVKRGRVVPVLPNIGSGGSSHREIHVKQAGQHSYYSAMKPIRNMDKKP.

Residues 49-155 (SRLSRSVLRW…EEVYTLLTHR (107 aa)) form the Calponin-homology (CH) domain.

As to expression, highly expressed in testis, the expression is observed precisely in seminiferous tubules.

The protein resides in the nucleus. Functionally, may play a role in apoptosis regulation. This Homo sapiens (Human) protein is Spermatogenesis-associated protein 4 (SPATA4).